A 546-amino-acid chain; its full sequence is Probable protein kinase UbiB (546 aa).

Residues Asp124–Leu502 enclose the Protein kinase domain. Residues Leu130–Val138 and Lys153 contribute to the ATP site. Asp288 functions as the Proton acceptor in the catalytic mechanism. 2 helical membrane-spanning segments follow: residues Tyr501 to Pro521 and Glu522 to Trp542.

Belongs to the ABC1 family. UbiB subfamily.

It localises to the cell inner membrane. It participates in cofactor biosynthesis; ubiquinone biosynthesis [regulation]. Functionally, is probably a protein kinase regulator of UbiI activity which is involved in aerobic coenzyme Q (ubiquinone) biosynthesis. The chain is Probable protein kinase UbiB from Klebsiella pneumoniae (strain 342).